The primary structure comprises 799 residues: High affinity nerve growth factor receptor (799 aa).

A signal peptide spans 1–32 (MLRGQRHGQLGWHRPAAGLGGLVTSLMLACAC). Residues 33-418 (AASCRETCCP…DPVEKKDETP (386 aa)) lie on the Extracellular side of the membrane. 2 disulfide bridges follow: cysteine 36–cysteine 41 and cysteine 40–cysteine 50. Asparagine 67 is a glycosylation site (N-linked (GlcNAc...) asparagine). LRR repeat units follow at residues 90–113 (LGEL…AFHF) and 116–137 (RLSH…TVQG). 10 N-linked (GlcNAc...) asparagine glycosylation sites follow: asparagine 121, asparagine 190, asparagine 204, asparagine 255, asparagine 264, asparagine 320, asparagine 325, asparagine 341, asparagine 361, and asparagine 404. The LRRCT domain occupies 148-219 (NPLHCSCALL…GDDVFLQCQV (72 aa)). Residues cysteine 154 and cysteine 193 are joined by a disulfide bond. 2 consecutive Ig-like C2-type domains span residues 196–285 (PSVK…VSVS) and 295–368 (AVEQ…LAAN). 2 disulfide bridges follow: cysteine 217/cysteine 267 and cysteine 302/cysteine 348. The chain crosses the membrane as a helical span at residues 419 to 442 (FGVSVAVGLAVSAALFLSALLLVL). Topologically, residues 443 to 799 (NKCGQRSKFG…APPSYLDVLG (357 aa)) are cytoplasmic. Residues 472–493 (MTLGGSSLSPTEGKGSGLQGHI) are interaction with SQSTM1. The residue at position 499 (tyrosine 499) is a Phosphotyrosine; by autocatalysis. One can recognise a Protein kinase domain in the interval 513–784 (IILKWELGEG…LSMKDVHARL (272 aa)). Residues 519-527 (LGEGAFGKV) and lysine 547 contribute to the ATP site. Catalysis depends on aspartate 653, which acts as the Proton acceptor. 4 positions are modified to phosphotyrosine; by autocatalysis: tyrosine 679, tyrosine 683, tyrosine 684, and tyrosine 794.

Belongs to the protein kinase superfamily. Tyr protein kinase family. Insulin receptor subfamily. As to quaternary structure, exists in a dynamic equilibrium between monomeric (low affinity) and dimeric (high affinity) structures. Homodimerization is induced by binding of a NGF dimer. Found in a complex, at least composed of KIDINS220, MAGI2, NTRK1 and RAPGEF2; the complex is mainly formed at late endosomes in a nerve growth factor (NGF)-dependent manner. Interacts with RAPGEF2; the interaction is strengthened after NGF stimulation. Interacts with SQSTM1; bridges NTRK1 to NGFR. Forms a ternary complex with NGFR and KIDINS220; this complex is affected by the expression levels of KIDINS220 and an increase in KIDINS220 expression leads to a decreased association of NGFR and NTRK1. Interacts (phosphorylated upon activation by NGF) with SHC1; mediates SHC1 phosphorylation and activation. Interacts (phosphorylated upon activation by NGF) with PLCG1; mediates PLCG1 phosphorylation and activation. Interacts (phosphorylated) with SH2B1 and SH2B2. Interacts with GRB2. Interacts with PIK3R1. Interacts with FRS2. Interacts with SORT1; may regulate NTRK1 anterograde axonal transport. Interacts with SH2D1A; regulates NTRK1. Interacts with NRADD. Interacts with RAB7A. Interacts with PTPRS. Interacts with USP36; USP36 does not deubiquitinate NTRK1. Interacts with GGA3. Interacts with TSPAN1; this interaction promotes NTRK1 stability. In terms of processing, ligand-mediated autophosphorylation. Interaction with SQSTM1 is phosphotyrosine-dependent. Autophosphorylation at Tyr-499 mediates interaction and phosphorylation of SHC1. Post-translationally, N-glycosylated. Ubiquitinated. Undergoes polyubiquitination upon activation; regulated by NGFR. Ubiquitination by NEDD4L leads to degradation. Ubiquitination regulates the internalization of the receptor. Isoform Trka-II is primarily expressed in neuronal cells; isoform Trka-I is found in non-neuronal tissues.

The protein resides in the cell membrane. It localises to the early endosome membrane. It is found in the late endosome membrane. The protein localises to the recycling endosome membrane. The catalysed reaction is L-tyrosyl-[protein] + ATP = O-phospho-L-tyrosyl-[protein] + ADP + H(+). The pro-survival signaling effect of NTRK1 in neurons requires its endocytosis into signaling early endosomes and its retrograde axonal transport. This is regulated by different proteins including CFL1, RAC1 and SORT1. NTF3 is unable to induce this signaling probably due to the lability of the NTF3-NTRK1 complex in endosomes. SH2D1A inhibits the autophosphorylation of the receptor, and alters the recruitment and activation of downstream effectors and signaling cascades. Regulated by NGFR. Functionally, receptor tyrosine kinase involved in the development and the maturation of the central and peripheral nervous systems through regulation of proliferation, differentiation and survival of sympathetic and nervous neurons. High affinity receptor for NGF which is its primary ligand. Can also bind and be activated by NTF3/neurotrophin-3. However, NTF3 only supports axonal extension through NTRK1 but has no effect on neuron survival. Upon dimeric NGF ligand-binding, undergoes homodimerization, autophosphorylation and activation. Recruits, phosphorylates and/or activates several downstream effectors including SHC1, FRS2, SH2B1, SH2B2 and PLCG1 that regulate distinct overlapping signaling cascades driving cell survival and differentiation. Through SHC1 and FRS2 activates a GRB2-Ras-MAPK cascade that regulates cell differentiation and survival. Through PLCG1 controls NF-Kappa-B activation and the transcription of genes involved in cell survival. Through SHC1 and SH2B1 controls a Ras-PI3 kinase-AKT1 signaling cascade that is also regulating survival. In absence of ligand and activation, may promote cell death, making the survival of neurons dependent on trophic factors. The protein is High affinity nerve growth factor receptor (Ntrk1) of Rattus norvegicus (Rat).